A 1164-amino-acid polypeptide reads, in one-letter code: Nuclear exosome regulator NRDE2 (1164 aa).

Disordered stretches follow at residues 1–25 (MALF…ELDW) and 39–149 (LSQQ…GHRF). An N-acetylalanine modification is found at alanine 2. Basic and acidic residues predominate over residues 61–73 (LKSESSDESDTNK). Residues 61-383 (LKSESSDESD…IESNQSSVDL (323 aa)) adopt a coiled-coil conformation. The segment covering 74–103 (KLKQTSRKKKKEKKKKRKHQHHKKTKRKHG) has biased composition (basic residues). A compositionally biased stretch (basic and acidic residues) spans 110-133 (SETDTDSEKDKPSRGVGGSKKESE). The segment at 163-266 (FRTDKKPDPA…KDLEDAAPVT (104 aa)) is MID/MTR4-interacting domain. Residues 279 to 305 (TTHWLQGQGPPEQESKQPDAQPDSESA) are disordered. HAT repeat units follow at residues 305-337 (AALK…FQDE), 395-427 (WEPS…FCQS), 758-792 (SQGK…LEWL), 978-1010 (YPLA…IQNK), and 1067-1101 (GLMH…FLVS).

It belongs to the NRDE2 family. As to quaternary structure, interacts with MTREX; the interaction is direct and stabilizes NRDE2. Interacts with EXOSC10, EFTUD2 and EIF4A3.

Its subcellular location is the nucleus speckle. The protein localises to the nucleus. It is found in the nucleolus. It localises to the nucleoplasm. Protein of the nuclear speckles that regulates RNA degradation and export from the nucleus through its interaction with MTREX an essential factor directing various RNAs to exosomal degradation. Changes the conformation of MTREX, precluding its association with the nuclear exosome and interaction with proteins required for its function in RNA exosomal degradation. Negatively regulates, for instance, the degradation of mRNAs and lncRNAs by inhibiting their MTREX-mediated recruitment to nuclear exosome. By preventing the degradation of RNAs in the nucleus, it promotes their export to the cytoplasm. U5 snRNP-associated RNA splicing factor which is required for efficient splicing of CEP131 pre-mRNA and plays an important role in centrosome maturation, integrity and function during mitosis. Suppresses intron retention in a subset of pre-mRNAs containing short, GC-rich introns with relatively weak 5' and 3' splice sites. Plays a role in DNA damage response. This Homo sapiens (Human) protein is Nuclear exosome regulator NRDE2.